A 425-amino-acid polypeptide reads, in one-letter code: Dihydroorotase (425 aa).

Histidine 58 and histidine 60 together coordinate Zn(2+). Residues histidine 60 to arginine 62 and asparagine 92 contribute to the substrate site. Zn(2+)-binding residues include aspartate 150, histidine 177, and histidine 230. Asparagine 276 provides a ligand contact to substrate. Residue aspartate 303 coordinates Zn(2+). Residue aspartate 303 is part of the active site. Substrate is bound by residues histidine 307 and phenylalanine 321 to glycine 322.

The protein belongs to the metallo-dependent hydrolases superfamily. DHOase family. Class I DHOase subfamily. Zn(2+) is required as a cofactor.

It carries out the reaction (S)-dihydroorotate + H2O = N-carbamoyl-L-aspartate + H(+). Its pathway is pyrimidine metabolism; UMP biosynthesis via de novo pathway; (S)-dihydroorotate from bicarbonate: step 3/3. In terms of biological role, catalyzes the reversible cyclization of carbamoyl aspartate to dihydroorotate. The sequence is that of Dihydroorotase from Pediococcus pentosaceus (strain ATCC 25745 / CCUG 21536 / LMG 10740 / 183-1w).